The sequence spans 88 residues: Exodeoxyribonuclease 7 small subunit (88 aa).

The segment at 69 to 88 is disordered; it reads DPMHPDDGEPFDPSLVSTSQ.

Belongs to the XseB family. In terms of assembly, heterooligomer composed of large and small subunits.

It is found in the cytoplasm. It catalyses the reaction Exonucleolytic cleavage in either 5'- to 3'- or 3'- to 5'-direction to yield nucleoside 5'-phosphates.. Its function is as follows. Bidirectionally degrades single-stranded DNA into large acid-insoluble oligonucleotides, which are then degraded further into small acid-soluble oligonucleotides. The sequence is that of Exodeoxyribonuclease 7 small subunit from Xylella fastidiosa (strain M23).